A 161-amino-acid polypeptide reads, in one-letter code: Allophycocyanin alpha chain (161 aa).

Asn-71 carries the post-translational modification N4-methylasparagine. Cys-81 provides a ligand contact to (2R,3E)-phycocyanobilin.

Belongs to the phycobiliprotein family. Heterodimer of an alpha and a beta chain. In terms of processing, contains one covalently linked phycocyanobilin chromophore.

The protein localises to the plastid. It localises to the chloroplast thylakoid membrane. Light-harvesting photosynthetic bile pigment-protein from the phycobiliprotein complex. Allophycocyanin has a maximum absorption at approximately 650 nanometers. In Galdieria sulphuraria (Red alga), this protein is Allophycocyanin alpha chain (apcA).